The primary structure comprises 254 residues: Acetylglutamate kinase (254 aa).

Substrate contacts are provided by residues 40–41 (GG), R62, and N158.

The protein belongs to the acetylglutamate kinase family. ArgB subfamily.

It is found in the cytoplasm. It carries out the reaction N-acetyl-L-glutamate + ATP = N-acetyl-L-glutamyl 5-phosphate + ADP. It functions in the pathway amino-acid biosynthesis; L-arginine biosynthesis; N(2)-acetyl-L-ornithine from L-glutamate: step 2/4. In terms of biological role, catalyzes the ATP-dependent phosphorylation of N-acetyl-L-glutamate. The sequence is that of Acetylglutamate kinase from Chloroflexus aggregans (strain MD-66 / DSM 9485).